We begin with the raw amino-acid sequence, 887 residues long: MIKLTPAMKQYYDAKKQHSDALIFFRMGDFYESFGEDAKIIAKELEITLTTRGKDIEGEKMPLAGIPYHALDNYLPRLIKKGYKVAICEQLEDPKKAKGIIKRGVVRVVTPGTAIDTSMFTDPSNNYLMSISGGDGDYGVSFLDVSTGEFLTTQFADKSPYDRIASEAARMRPSECIISRTMFSDERLVERLKELNVLVQGFKDEAFDVDSSRKLLERHFNVSTLEGMGCAGLPYATSSAGAALDYALTTQMRELGHVSELSTYSDSEFMMLDSITLRNLEIVKNVRGEGNDTSILKVLDDTNTPMGGRLLQKWLLKPLINVDSIDHRLDALECLANDTMLRFDVRSHLSFVKDIERLIGRVVYGNSNARDLIALKRSLGSVPQIVESMGDDPGCEMLINIRDGLLGFEQLENIVKLIDDAIVDEPPVSVREGGMIRSGYNEKLDELKGMSTGGKTWIASFQQKERDRTGIKSLKVGYNRVFGYYIEITKSNIAQIPDDYIRKQTMRNAERFYTPELKEWEDVILSADEKITALENELFTEITSRIASHASDLQRIAVLIGQLDCTASLAEVAVNNNFVRPNITSDCKILIREGRHPVVEKTVRGGFVPNDTEMDCVDEQFLLITGPNMAGKSTYMRQVSLIVIMAQAGSFVPASHASIGIVDRVFTRVGAFDDLASGQSTFMVEMVELANILNNATPKSLVLLDEIGRGTSTYDGYSIAKAVVEYIHNKGRVGVRSLFATHYHQLTNISSSLKRVKNYHIAVKEDGDDLVFLRKIVPGATDKSYGIHVARLAGVPHKVTQRAKEVLQDIEDESVISKESDSKRGRKKKSAQYTQLMLFDPEGSSAPVAEPDPVVEELKELDVNSMTPIEALNKLSELQKKAGKGGK.

Gly626–Ser633 is a binding site for ATP.

The protein belongs to the DNA mismatch repair MutS family.

Functionally, this protein is involved in the repair of mismatches in DNA. It is possible that it carries out the mismatch recognition step. This protein has a weak ATPase activity. The polypeptide is DNA mismatch repair protein MutS (Methanococcoides burtonii (strain DSM 6242 / NBRC 107633 / OCM 468 / ACE-M)).